The sequence spans 592 residues: Alpha-1,3-galactosidase B (592 aa).

A signal peptide spans M1–S14. A lipid anchor (N-palmitoyl cysteine) is attached at C15. Residue C15 is the site of S-diacylglycerol cysteine attachment. PbH1 repeat units lie at residues T429–T451, P452–G474, and C485–D538.

The protein belongs to the glycosyl hydrolase 110 family. B subfamily.

Its subcellular location is the cell membrane. The enzyme catalyses Hydrolysis of terminal, non-reducing branched (1-&gt;3)-alpha-D-galactosidic residues, producing free D-galactose.. It carries out the reaction Hydrolysis of terminal, non-reducing linear (1-&gt;3)-alpha-D-galactosidic residues, producing free D-galactose.. The catalysed reaction is Hydrolysis of terminal, non-reducing alpha-D-galactose residues in alpha-D-galactosides, including galactose oligosaccharides, galactomannans and galactolipids.. Its function is as follows. Alpha-galactosidase. Removes both branched alpha-1,3-linked galactose residues of blood group B antigens and linear alpha-1,3-linked galactose structures. In Phocaeicola vulgatus (strain ATCC 8482 / DSM 1447 / JCM 5826 / CCUG 4940 / NBRC 14291 / NCTC 11154) (Bacteroides vulgatus), this protein is Alpha-1,3-galactosidase B (glaB1).